Consider the following 500-residue polypeptide: NAD(P)H-quinone oxidoreductase chain 4, chloroplastic (500 aa).

A run of 14 helical transmembrane segments spans residues 4–24 (FPWLTIIVVFPISAGSLMLFL), 35–55 (YTICICILELLITTYAFCYNF), 87–107 (IGTILLTGFITTLATLAAFPV), 113–130 (LFHFLMLAMYSGQIGSFS), 134–154 (LLLFFIMWELELIPVYLLLSM), 167–187 (FILYTAGSSIFLLIGVLGISL), 211–231 (IILYIGFLIAFAVKSPLIPLH), 242–262 (HYSTCMLLAGILLKMGAYGLV), 272–292 (AHSLFSPWLMVVGTIQIIYAA), 305–325 (IAYSSVSHMGFIIIGIASITD), 330–350 (GAILQIISHGFIGAALFFLAG), 386–406 (LALPGMSGFVAEFIVFFGIIT), 416–436 (IFIIVVMAIGMILTPIYLLSM), and 462–482 (LFLSISSLLPIIGMGIYPDFV).

Belongs to the complex I subunit 4 family.

Its subcellular location is the plastid. It is found in the chloroplast thylakoid membrane. The catalysed reaction is a plastoquinone + NADH + (n+1) H(+)(in) = a plastoquinol + NAD(+) + n H(+)(out). It catalyses the reaction a plastoquinone + NADPH + (n+1) H(+)(in) = a plastoquinol + NADP(+) + n H(+)(out). The polypeptide is NAD(P)H-quinone oxidoreductase chain 4, chloroplastic (Aethionema cordifolium (Lebanon stonecress)).